The following is a 255-amino-acid chain: Sulfur carrier protein FdhD (255 aa).

The active-site Cysteine persulfide intermediate is C103.

This sequence belongs to the FdhD family.

The protein resides in the cytoplasm. Its function is as follows. Required for formate dehydrogenase (FDH) activity. Acts as a sulfur carrier protein that transfers sulfur from IscS to the molybdenum cofactor prior to its insertion into FDH. This is Sulfur carrier protein FdhD from Sulfurisphaera tokodaii (strain DSM 16993 / JCM 10545 / NBRC 100140 / 7) (Sulfolobus tokodaii).